We begin with the raw amino-acid sequence, 120 residues long: NAD(P)H-quinone oxidoreductase subunit 3, chloroplastic (120 aa).

Transmembrane regions (helical) follow at residues Ile9–Gly29, Met64–Met84, and Val88–Ser108.

Belongs to the complex I subunit 3 family. NDH is composed of at least 16 different subunits, 5 of which are encoded in the nucleus.

It is found in the plastid. The protein resides in the chloroplast thylakoid membrane. It carries out the reaction a plastoquinone + NADH + (n+1) H(+)(in) = a plastoquinol + NAD(+) + n H(+)(out). It catalyses the reaction a plastoquinone + NADPH + (n+1) H(+)(in) = a plastoquinol + NADP(+) + n H(+)(out). NDH shuttles electrons from NAD(P)H:plastoquinone, via FMN and iron-sulfur (Fe-S) centers, to quinones in the photosynthetic chain and possibly in a chloroplast respiratory chain. The immediate electron acceptor for the enzyme in this species is believed to be plastoquinone. Couples the redox reaction to proton translocation, and thus conserves the redox energy in a proton gradient. The protein is NAD(P)H-quinone oxidoreductase subunit 3, chloroplastic of Lemna minor (Common duckweed).